The chain runs to 345 residues: Phosphoribosylformylglycinamidine cyclo-ligase (345 aa).

Belongs to the AIR synthase family.

The protein resides in the cytoplasm. It carries out the reaction 2-formamido-N(1)-(5-O-phospho-beta-D-ribosyl)acetamidine + ATP = 5-amino-1-(5-phospho-beta-D-ribosyl)imidazole + ADP + phosphate + H(+). Its pathway is purine metabolism; IMP biosynthesis via de novo pathway; 5-amino-1-(5-phospho-D-ribosyl)imidazole from N(2)-formyl-N(1)-(5-phospho-D-ribosyl)glycinamide: step 2/2. The chain is Phosphoribosylformylglycinamidine cyclo-ligase from Shewanella baltica (strain OS223).